A 220-amino-acid chain; its full sequence is Splicing factor U2AF 26 kDa subunit (220 aa).

Alanine 2 carries the N-acetylalanine modification. The C3H1-type 1 zinc-finger motif lies at 12 to 40 (EKDKVNCSFYFKIGACRHGDRCSRLHNKP). The RRM domain maps to 65 to 147 (SHCHVSDVEV…QAVHAELSPV (83 aa)). The C3H1-type 2 zinc-finger motif lies at 149-176 (DFRESCCRQYEMGECTRGGFCNFMHLRP). Residues 186-220 (YGRGPRRRSPPRSHTGHRPRERNRRRSPDHRHGRF) form a disordered region. Positions 189–220 (GPRRRSPPRSHTGHRPRERNRRRSPDHRHGRF) are enriched in basic residues.

This sequence belongs to the splicing factor SR family. As to quaternary structure, interacts with GFI1, U2AF2 and C1QBP.

The protein localises to the nucleus. It is found in the nucleus speckle. Its subcellular location is the cytoplasm. In terms of biological role, RNA-binding protein that function as a pre-mRNA splicing factor. Plays a critical role in both constitutive and enhancer-dependent splicing by mediating protein-protein interactions and protein-RNA interactions required for accurate 3'-splice site selection. Acts by enhancing the binding of U2AF2 to weak pyrimidine tracts. Also participates in the regulation of alternative pre-mRNA splicing. Activates exon 5 skipping of PTPRC during T-cell activation; an event reversed by GFI1. Binds to RNA at the AG dinucleotide at the 3'-splice site. Shows a preference for AGC or AGA. This Bos taurus (Bovine) protein is Splicing factor U2AF 26 kDa subunit (U2AF1L4).